The primary structure comprises 150 residues: SsrA-binding protein (150 aa).

The disordered stretch occupies residues K127–D150.

It belongs to the SmpB family.

Its subcellular location is the cytoplasm. Functionally, required for rescue of stalled ribosomes mediated by trans-translation. Binds to transfer-messenger RNA (tmRNA), required for stable association of tmRNA with ribosomes. tmRNA and SmpB together mimic tRNA shape, replacing the anticodon stem-loop with SmpB. tmRNA is encoded by the ssrA gene; the 2 termini fold to resemble tRNA(Ala) and it encodes a 'tag peptide', a short internal open reading frame. During trans-translation Ala-aminoacylated tmRNA acts like a tRNA, entering the A-site of stalled ribosomes, displacing the stalled mRNA. The ribosome then switches to translate the ORF on the tmRNA; the nascent peptide is terminated with the 'tag peptide' encoded by the tmRNA and targeted for degradation. The ribosome is freed to recommence translation, which seems to be the essential function of trans-translation. The chain is SsrA-binding protein from Cupriavidus necator (strain ATCC 17699 / DSM 428 / KCTC 22496 / NCIMB 10442 / H16 / Stanier 337) (Ralstonia eutropha).